Here is a 276-residue protein sequence, read N- to C-terminus: Glutamate racemase (276 aa).

Residues 9-10 and 41-42 each bind substrate; these read DS and YG. The active-site Proton donor/acceptor is the cysteine 72. Residue 73–74 participates in substrate binding; the sequence is NT. The active-site Proton donor/acceptor is cysteine 183. 184-185 contacts substrate; sequence TH.

It belongs to the aspartate/glutamate racemases family.

The enzyme catalyses L-glutamate = D-glutamate. It participates in cell wall biogenesis; peptidoglycan biosynthesis. Provides the (R)-glutamate required for cell wall biosynthesis. This is Glutamate racemase from Shouchella clausii (strain KSM-K16) (Alkalihalobacillus clausii).